Reading from the N-terminus, the 376-residue chain is Putative endoglucanase type K (376 aa).

The N-terminal stretch at 1–18 (MRSYTLLALAGPLAVSAA) is a signal peptide. Residues 19–308 (SGSGHSTRYW…ATKPAQPVNK (290 aa)) form a catalytic region. The active-site Nucleophile is the Asp29. Asp140 functions as the Proton donor in the catalytic mechanism. Residues 229–332 (AFKGDTSASK…SCPAKTDATA (104 aa)) form a disordered region. Composition is skewed to low complexity over residues 235-258 (SASKPQPSSSAKKTTSAAAAAQPQ) and 291-306 (KPVATKPAATKPAQPV). The interval 309–338 (PKTTQKVRGTKTRGSCPAKTDATAKASVVP) is linker. In terms of domain architecture, CBM1 spans 335 to 374 (SVVPAYYQCGGSKSAYPNGNLACATGSKCVKQNEYYSQCV).

It belongs to the glycosyl hydrolase 45 (cellulase K) family.

The enzyme catalyses Endohydrolysis of (1-&gt;4)-beta-D-glucosidic linkages in cellulose, lichenin and cereal beta-D-glucans.. In Fusarium oxysporum (Fusarium vascular wilt), this protein is Putative endoglucanase type K.